A 380-amino-acid polypeptide reads, in one-letter code: MVDAIQVAELRRFVEQLKLNPSILHDPSLVFFKEYLRSLGAQVPKIEKTERDYEDKAETKPSFSPKHDDDDDDIMESDVELDNSDVVEPDNEPPQPMGDPTAEVTDENRDDAQSEKSKAMEAISDGRFDEAIEHLTKAVMLNPTSAILYATRASVFLKVKKPNAAIRDANVALQFNSDSAKGYKSRGMAKAMLGQWEEAAADLHVASKLDYDEEIGTMLKKVEPNAKRIEEHRRKYQRLRKEKELQRAERERRKQQEAQEREAQAALNDGEVISIHSTSELEAKTKAAKKASRLLILYFTATWCGPCRYMSPLYSNLATQHSRVVFLKVDIDKANDVAASWNISSVPTFCFIRDGKEVDKVVGADKGSLEQKIAQHSSSK.

Valine 2 carries the post-translational modification N-acetylvaline. The span at 49-59 (TERDYEDKAET) shows a compositional bias: basic and acidic residues. The segment at 49-115 (TERDYEDKAE…DENRDDAQSE (67 aa)) is disordered. The segment covering 69–91 (DDDDDIMESDVELDNSDVVEPDN) has biased composition (acidic residues). Residues 106–115 (DENRDDAQSE) show a composition bias toward basic and acidic residues. TPR repeat units lie at residues 112–145 (AQSE…NPTS), 147–179 (ILYA…NSDS), and 181–213 (KGYK…DYDE). The segment covering 240–263 (RKEKELQRAERERRKQQEAQEREA) has biased composition (basic and acidic residues). Residues 240-265 (RKEKELQRAERERRKQQEAQEREAQA) form a disordered region. Residues 252–378 (RRKQQEAQER…LEQKIAQHSS (127 aa)) enclose the Thioredoxin domain. Catalysis depends on nucleophile residues cysteine 304 and cysteine 307. Cysteine 304 and cysteine 307 are joined by a disulfide.

This sequence belongs to the thioredoxin family. As to quaternary structure, oligomerization under high temperature.

Thiol-disulfide oxidoreductase that possesses insulin disulfide bonds reducing activity, disulfide reductase, foldase chaperone and holdase chaperone activities. Heat shock causes oligomerization and formation of high molecular weiht (HMW) complexes with concomitant functional switching from a disulfide reductase and foldase chaperone to a holdase chaperone. May interact with HSP70 proteins through the TPR repeats. The sequence is that of TPR repeat-containing thioredoxin TDX (TDX) from Arabidopsis thaliana (Mouse-ear cress).